The chain runs to 475 residues: ATP synthase subunit beta (475 aa).

Residue 155–162 (GGAGVGKT) participates in ATP binding.

Belongs to the ATPase alpha/beta chains family. F-type ATPases have 2 components, CF(1) - the catalytic core - and CF(0) - the membrane proton channel. CF(1) has five subunits: alpha(3), beta(3), gamma(1), delta(1), epsilon(1). CF(0) has three main subunits: a(1), b(2) and c(9-12). The alpha and beta chains form an alternating ring which encloses part of the gamma chain. CF(1) is attached to CF(0) by a central stalk formed by the gamma and epsilon chains, while a peripheral stalk is formed by the delta and b chains.

It is found in the cell inner membrane. The catalysed reaction is ATP + H2O + 4 H(+)(in) = ADP + phosphate + 5 H(+)(out). Produces ATP from ADP in the presence of a proton gradient across the membrane. The catalytic sites are hosted primarily by the beta subunits. The polypeptide is ATP synthase subunit beta (Rhizobium etli (strain ATCC 51251 / DSM 11541 / JCM 21823 / NBRC 15573 / CFN 42)).